A 345-amino-acid polypeptide reads, in one-letter code: Ferrochelatase (345 aa).

The Fe cation site is built by histidine 192 and glutamate 295.

This sequence belongs to the ferrochelatase family.

Its subcellular location is the cytoplasm. The catalysed reaction is heme b + 2 H(+) = protoporphyrin IX + Fe(2+). The protein operates within porphyrin-containing compound metabolism; protoheme biosynthesis; protoheme from protoporphyrin-IX: step 1/1. Catalyzes the ferrous insertion into protoporphyrin IX. In Opitutus terrae (strain DSM 11246 / JCM 15787 / PB90-1), this protein is Ferrochelatase.